Here is a 251-residue protein sequence, read N- to C-terminus: Tachykinins (251 aa).

The N-terminal stretch at 1–21 (MGAPRTCLIFITIQLVSLAYA) is a signal peptide. Positions 22–25 (QEVS) are excised as a propeptide. Arginine 36 is subject to Arginine amide. A propeptide spanning residues 39-50 (KYFDEEGIEQFY) is cleaved from the precursor. Lysine 61 bears the Lysine amide mark. The propeptide occupies 65–163 (SLQDILEAPE…MEPEQSNDLD (99 aa)). Arginine amide is present on arginine 176. Positions 180-183 (SINN) are excised as a propeptide. Arginine 199 bears the Arginine amide mark. A propeptide spanning residues 203-223 (DLKNSNAHEIKFLVDQNGPLP) is cleaved from the precursor. Arginine 235 carries the post-translational modification Arginine amide. Positions 239–251 (WTDEPSLEMDMPN) are excised as a propeptide.

Belongs to the tachykinin family. Tachykinin-related peptide 1: Expressed in antennal lobe (AL) and gnathal ganglion (GNG) (at protein level). Expression in AL detected in all animals, in GNG in most animals (at protein level). Not expressed in corpora cardiaca (CC) and corpora allata (CA) (at protein level). Tachykinin-related peptide 2: Expressed in antennal lobe (AL) corpora cardiaca (CC) and corpora allata (CA) with expression detected in few animals (at protein level). Not expressed in gnathal ganglion (GNG) (at protein level). Tachykinin-related peptide 4: Expressed in corpora cardiaca (CC), corpora allata (CA), antennal lobe (AL) and gnathal ganglion (GNG) (at protein level). Expression in AL and GNG detected in most animals, in CC and CA detected in few animals (at protein level). Tachykinin-related peptide 5: Expressed in corpora cardiaca (CC), corpora allata (CA), antennal lobe (AL) and gnathal ganglion (GNG) (at protein level). Expression in CC and CA detected in some animals, in AL and GNG in few animals (at protein level). Tachykinin-related peptide 6: Expressed in antennal lobe (AL) and gnathal ganglion (GNG) (at protein level). Expression in AL detected in all animals, in GNG in some animals (at protein level). Not expressed in corpora cardiaca (CC) and corpora allata (CA) (at protein level).

The protein localises to the secreted. Its function is as follows. Tachykinins are active peptides which excite neurons, evoke behavioral responses, are potent vasodilators and secretagogues, and contract (directly or indirectly) many smooth muscles. The protein is Tachykinins of Agrotis ipsilon (Black cutworm moth).